The sequence spans 511 residues: Early growth response protein 1 (511 aa).

Disordered stretches follow at residues 133 to 169 and 291 to 312; these read ASIPSSTSQATHPSSSSTSSIPSSSSSSTSSASLSCS and PSRMRKYPNRPSKTPPHERPYA. Residues 137 to 169 show a composition bias toward low complexity; sequence SSTSQATHPSSSSTSSIPSSSSSSTSSASLSCS. 3 consecutive C2H2-type zinc fingers follow at residues 311–335, 341–363, and 369–391; these read YACPVETCDRRFSRSDELTRHIRIH, FQCRICMRNFSRSDHLTTHIRTH, and FACEICGRKFARSDERKRHTKIH. The interval 384–406 is disordered; sequence RKRHTKIHMRQKDKKAEKGATAA. The span at 386–396 shows a compositional bias: basic residues; that stretch reads RHTKIHMRQKD.

This sequence belongs to the EGR C2H2-type zinc-finger protein family. In terms of tissue distribution, detected in muscle and brain.

Its subcellular location is the nucleus. It is found in the cytoplasm. Its function is as follows. Transcriptional regulator. Recognizes and binds to the DNA sequence 5'-GCG(T/G)GGGCG-3'(EGR-site) in the promoter region of target genes. Binds double-stranded target DNA, irrespective of the cytosine methylation status. Regulates the transcription of numerous target genes, and thereby plays an important role in regulating the response to growth factors, DNA damage, and ischemia. Plays a role in the regulation of cell survival, proliferation and cell death. Mediates responses to ischemia and hypoxia; regulates the expression of proteins that are involved in inflammatory processes. Plays a role in regulating the expression of circadian clock genes. Plays a role in the organization of Muller glia cells in the inner and outer plexiform layers of the retina. This chain is Early growth response protein 1 (egr1), found in Danio rerio (Zebrafish).